Here is a 279-residue protein sequence, read N- to C-terminus: Serine protease 29 (279 aa).

The signal sequence occupies residues 1–17; sequence MLIQLCLTLFFLGCSIA. Residues 31–276 form the Peptidase S1 domain; that stretch reads IVGGHSAPQG…FLPWITQQMQ (246 aa). Cysteine 62 and cysteine 78 are oxidised to a cystine. Active-site charge relay system residues include histidine 77 and aspartate 124. 3 disulfides stabilise this stretch: cysteine 158/cysteine 234, cysteine 191/cysteine 215, and cysteine 224/cysteine 252. N-linked (GlcNAc...) asparagine glycosylation occurs at asparagine 197. Serine 228 acts as the Charge relay system in catalysis. N-linked (GlcNAc...) asparagine glycosylation occurs at asparagine 235.

Belongs to the peptidase S1 family. In terms of assembly, homooligomer, heterodimer and heterotetramer. Able to form homo- and hetero- tetrameric structures. Heterotetramer is far more stable than the homotetramer. As to expression, expressed in embryos and placenta. Found in uterus especially in glandular epithelium during zona lysis and implantation.

It is found in the secreted. Functionally, involved in embryo hatching and implantation. This chain is Serine protease 29 (Prss29), found in Mus musculus (Mouse).